Consider the following 505-residue polypeptide: MSEQKPQVAEQAQELNSELQARREKLAALREKGIAFPNDFRREHLSDQLHAEYGEKTNEELEALDIEVTVAGRMMTRRIMGKASFVTLQDVGGRIQLYVSRDDLPEGVYNEEFKKWDLGDILGARGKLFKTKTGELSIHCSELRLLTKALRPLPDKFHGLADQETRYRQRYLDLIANDESRNTFKVRSQVMSGIRRFMVEKGFMEVETPMMQVIPGGASARPFVTHHNALDIDMYLRIAPELYLKRLVVGGFERVFEINRNFRNEGVSPRHNPEFTMMELYMAYADYKDLIALTEELFRTLTETVLGSSVVQYGDQTFDFGKPFAKLTMKEAICKYRPETNVADLDDMDKAVAIAESLGIKVEKSWGLGRVQCEIFEETAESHLIQPTFITEYPAEVSPLARRNDDNPFITDRFEFFIGGREIGNGFSELNDAEDQAQRFADQVSAKEAGDDEAMFYDEDYVTALEHGLPPTAGLGIGIDRMVMLFTNSHTIRDVILFPAMRPVK.

Mg(2+) contacts are provided by Glu415 and Glu422.

Belongs to the class-II aminoacyl-tRNA synthetase family. In terms of assembly, homodimer. The cofactor is Mg(2+).

Its subcellular location is the cytoplasm. It catalyses the reaction tRNA(Lys) + L-lysine + ATP = L-lysyl-tRNA(Lys) + AMP + diphosphate. The sequence is that of Lysine--tRNA ligase from Yersinia enterocolitica serotype O:8 / biotype 1B (strain NCTC 13174 / 8081).